A 223-amino-acid chain; its full sequence is Transmembrane protein 114 (223 aa).

Residues 7–27 (GLAGAAALTGALSFVLLAAAI) form a helical membrane-spanning segment. Asn55 and Asn89 each carry an N-linked (GlcNAc...) asparagine glycan. 3 helical membrane-spanning segments follow: residues 106 to 126 (FVILLPLSLILMVFGGMTGFL), 134 to 154 (LLLLLTGILFLFGAMVTLAGI), and 189 to 209 (LALGWISFIAELLTGAAFLAA).

This sequence belongs to the PMP-22/EMP/MP20 family.

The protein localises to the cell junction. The protein resides in the tight junction. It localises to the lateral cell membrane. Its subcellular location is the apical cell membrane. The protein is Transmembrane protein 114 of Homo sapiens (Human).